We begin with the raw amino-acid sequence, 623 residues long: AFI1-like protein C776.06c (623 aa).

One can recognise a uDENN domain in the interval 5-204; that stretch reads DYLLTAIFDP…IDNIPKPGSE (200 aa). The region spanning 248–386 is the cDENN domain; sequence ISNLINTFID…SDATTTMDTK (139 aa). In terms of domain architecture, dDENN spans 388–476; sequence LFNNTSPFTP…WSWDNDDEKV (89 aa).

Belongs to the AFI1/mesA family.

The protein localises to the cytoplasm. It is found in the cell cortex. It localises to the nucleus. Involved in polarity establishment. The polypeptide is AFI1-like protein C776.06c (Schizosaccharomyces pombe (strain 972 / ATCC 24843) (Fission yeast)).